A 456-amino-acid polypeptide reads, in one-letter code: Bifunctional protein GlmU (456 aa).

The tract at residues 1–228 is pyrophosphorylase; the sequence is MPQNTLNIVI…SHLAAGVNNK (228 aa). Residues 11–14, lysine 25, glutamine 75, 80–81, 102–104, glycine 138, glutamate 153, asparagine 168, and asparagine 226 each bind UDP-N-acetyl-alpha-D-glucosamine; these read LAAG, GT, and YGD. Aspartate 104 contacts Mg(2+). Residue asparagine 226 coordinates Mg(2+). The segment at 229-249 is linker; the sequence is LQLAELERIFQTGQAQELLKA. An N-acetyltransferase region spans residues 250-456; the sequence is GVTLHDPARF…GWVRPEKDKQ (207 aa). UDP-N-acetyl-alpha-D-glucosamine contacts are provided by arginine 332 and lysine 350. Residue histidine 362 is the Proton acceptor of the active site. Tyrosine 365 and asparagine 376 together coordinate UDP-N-acetyl-alpha-D-glucosamine. Acetyl-CoA-binding positions include alanine 379, 385 to 386, serine 404, alanine 422, and arginine 439; that span reads NY.

In the N-terminal section; belongs to the N-acetylglucosamine-1-phosphate uridyltransferase family. It in the C-terminal section; belongs to the transferase hexapeptide repeat family. As to quaternary structure, homotrimer. It depends on Mg(2+) as a cofactor.

The protein resides in the cytoplasm. It carries out the reaction alpha-D-glucosamine 1-phosphate + acetyl-CoA = N-acetyl-alpha-D-glucosamine 1-phosphate + CoA + H(+). The catalysed reaction is N-acetyl-alpha-D-glucosamine 1-phosphate + UTP + H(+) = UDP-N-acetyl-alpha-D-glucosamine + diphosphate. It functions in the pathway nucleotide-sugar biosynthesis; UDP-N-acetyl-alpha-D-glucosamine biosynthesis; N-acetyl-alpha-D-glucosamine 1-phosphate from alpha-D-glucosamine 6-phosphate (route II): step 2/2. It participates in nucleotide-sugar biosynthesis; UDP-N-acetyl-alpha-D-glucosamine biosynthesis; UDP-N-acetyl-alpha-D-glucosamine from N-acetyl-alpha-D-glucosamine 1-phosphate: step 1/1. Its pathway is bacterial outer membrane biogenesis; LPS lipid A biosynthesis. In terms of biological role, catalyzes the last two sequential reactions in the de novo biosynthetic pathway for UDP-N-acetylglucosamine (UDP-GlcNAc). The C-terminal domain catalyzes the transfer of acetyl group from acetyl coenzyme A to glucosamine-1-phosphate (GlcN-1-P) to produce N-acetylglucosamine-1-phosphate (GlcNAc-1-P), which is converted into UDP-GlcNAc by the transfer of uridine 5-monophosphate (from uridine 5-triphosphate), a reaction catalyzed by the N-terminal domain. The chain is Bifunctional protein GlmU from Neisseria meningitidis serogroup C (strain 053442).